We begin with the raw amino-acid sequence, 258 residues long: Arylamine N-acetyltransferase 1 (258 aa).

C59 acts as the Acyl-thioester intermediate in catalysis. 97-98 contacts substrate; that stretch reads IH. Catalysis depends on residues H98 and D113. Y199 and T205 together coordinate CoA.

Belongs to the arylamine N-acetyltransferase family.

Its subcellular location is the cytoplasm. It catalyses the reaction an arylamine + acetyl-CoA = an N-acetylarylamine + CoA. Participates in the detoxification of a plethora of hydrazine and arylamine drugs. The chain is Arylamine N-acetyltransferase 1 (NAT1) from Felis catus (Cat).